The following is an 811-amino-acid chain: Ribosome biogenesis protein ERB1 (811 aa).

Residues 1 to 11 are compositionally biased toward polar residues; it reads MARNSKATDTP. Residues 1–138 form a disordered region; that stretch reads MARNSKATDT…VHTKFSDGRP (138 aa). Positions 27–96 are enriched in acidic residues; sequence EDAEESSSDE…LSDVDSEEFS (70 aa). Polar residues predominate over residues 104 to 121; it reads ASITDKLSGTKIRSYSNA. Over residues 128-138 the composition is skewed to basic and acidic residues; sequence EVHTKFSDGRP. The tract at residues 270 to 386 is required for interaction with NOP7; the sequence is RFVPSKHEAK…LRKVPGYQEG (117 aa). Residues 386-422 form a required for interaction with YTM1 region; sequence GLRERFERCLDLYLAPRTRHNKLNIDPDSLIPELPSP. 2 WD repeats span residues 438–477 and 485–525; these read GHTE…QVYK and NTDD…FDIE. A disordered region spans residues 547 to 566; sequence TKNSNIKVNSDDEDEEVEKA. WD repeat units follow at residues 595–637, 640–678, 681–720, 724–764, and 780–811; these read QCRK…SQSP, KSKG…LVKK, PGAR…TPYK, YHDK…DLMT, and INSL…LWTT.

It belongs to the WD repeat BOP1/ERB1 family. Component of the NOP7 complex, composed of ERB1, NOP7 and YTM1. The complex is held together by ERB1, which interacts with NOP7 via its N-terminal domain and with YTM1 via a high-affinity interaction between the seven-bladed beta-propeller domains of the 2 proteins. The NOP7 complex associates with the 66S pre-ribosome.

It localises to the nucleus. The protein localises to the nucleolus. Its subcellular location is the nucleoplasm. Its function is as follows. Component of the NOP7 complex, which is required for maturation of the 25S and 5.8S ribosomal RNAs and formation of the 60S ribosome. The sequence is that of Ribosome biogenesis protein ERB1 from Debaryomyces hansenii (strain ATCC 36239 / CBS 767 / BCRC 21394 / JCM 1990 / NBRC 0083 / IGC 2968) (Yeast).